The following is a 1185-amino-acid chain: Ubiquitin carboxyl-terminal hydrolase 36 (1185 aa).

Positions 126-169 (TGKALSSNGHDNTNGVNGSSAATVNGNRKQTVEQSNQNSTTNPN) are enriched in polar residues. A disordered region spans residues 126 to 174 (TGKALSSNGHDNTNGVNGSSAATVNGNRKQTVEQSNQNSTTNPNELPKP). The 311-residue stretch at 199–509 (AGMLNVGNTC…NAYIMFYELD (311 aa)) folds into the USP domain. Cys208 serves as the catalytic Nucleophile. Residue His468 is the Proton acceptor of the active site. A phosphoserine mark is found at Ser552 and Ser554. The segment covering 642–658 (ANSNKSSCNNNTLTTNS) has biased composition (low complexity). Disordered regions lie at residues 642-804 (ANSN…TDAI), 818-975 (HRAT…YQSE), 1056-1122 (APTL…GSFP), and 1136-1185 (NKFK…QQQS). Residues 670-683 (SDEEDEDEDSDDDV) are compositionally biased toward acidic residues. The residue at position 716 (Thr716) is a Phosphothreonine. 2 positions are modified to phosphoserine: Ser726 and Ser728. 2 stretches are compositionally biased toward low complexity: residues 778-797 (KSNG…SNNN) and 836-853 (QQQQ…SLIS). Ser867 is subject to Phosphoserine. At Thr870 the chain carries Phosphothreonine. The residue at position 873 (Ser873) is a Phosphoserine. A compositionally biased stretch (acidic residues) spans 891–920 (DDNDDDDEDADEEDDADADAEQEEYDDEVV). Polar residues-rich tracts occupy residues 924 to 942 (TTPS…SKPS) and 959 to 975 (SAKS…YQSE). Phosphothreonine is present on Thr925. Residues 1062 to 1071 (EAREQRKRDA) are compositionally biased toward basic and acidic residues. Low complexity-rich tracts occupy residues 1151–1161 (QQQRALQRHLA) and 1172–1185 (QSTG…QQQS).

The protein belongs to the peptidase C19 family. Interacts with atms/PAF1, but not with CycT.

The protein resides in the nucleus. It is found in the nucleolus. The enzyme catalyses Thiol-dependent hydrolysis of ester, thioester, amide, peptide and isopeptide bonds formed by the C-terminal Gly of ubiquitin (a 76-residue protein attached to proteins as an intracellular targeting signal).. Functionally, required for maintaining multiple types of adult stem cells, including male and female germline, epithelial follicle cell and intestinal stem cells. May function as a transcriptional repressor by continually deubiquiting histone H2B at the promoters of genes critical for cellular differentiation, thereby preventing histone H3 'Lys-4' trimethylation (H3K4). Controls selective autophagy activation by ubiquitinated proteins. The sequence is that of Ubiquitin carboxyl-terminal hydrolase 36 (Usp36) from Drosophila mojavensis (Fruit fly).